The sequence spans 199 residues: dITP/XTP pyrophosphatase (199 aa).

A substrate-binding site is contributed by 12-17; the sequence is SGNAGK. Aspartate 73 functions as the Proton acceptor in the catalytic mechanism. Aspartate 73 serves as a coordination point for Mg(2+). Residues serine 74, 157–160, lysine 180, and 185–186 contribute to the substrate site; these read FGYD and HR.

It belongs to the HAM1 NTPase family. Homodimer. Requires Mg(2+) as cofactor.

The catalysed reaction is XTP + H2O = XMP + diphosphate + H(+). It catalyses the reaction dITP + H2O = dIMP + diphosphate + H(+). It carries out the reaction ITP + H2O = IMP + diphosphate + H(+). Functionally, pyrophosphatase that catalyzes the hydrolysis of nucleoside triphosphates to their monophosphate derivatives, with a high preference for the non-canonical purine nucleotides XTP (xanthosine triphosphate), dITP (deoxyinosine triphosphate) and ITP. Seems to function as a house-cleaning enzyme that removes non-canonical purine nucleotides from the nucleotide pool, thus preventing their incorporation into DNA/RNA and avoiding chromosomal lesions. The sequence is that of dITP/XTP pyrophosphatase from Neisseria meningitidis serogroup B (strain ATCC BAA-335 / MC58).